A 774-amino-acid chain; its full sequence is Protein translocase subunit SecA 2 (774 aa).

Residues Gln94, 112-116, and Asp501 each bind ATP; that span reads GEGKT.

Belongs to the SecA family. In terms of assembly, monomer and homodimer. Part of the essential Sec protein translocation apparatus which comprises SecA, SecYEG and auxiliary proteins SecDF. Other proteins may also be involved.

The protein resides in the cell membrane. It is found in the cytoplasm. It catalyses the reaction ATP + H2O + cellular proteinSide 1 = ADP + phosphate + cellular proteinSide 2.. Functionally, part of the Sec protein translocase complex. Interacts with the SecYEG preprotein conducting channel. Has a central role in coupling the hydrolysis of ATP to the transfer of proteins into and across the cell membrane, serving as an ATP-driven molecular motor driving the stepwise translocation of polypeptide chains across the membrane. This is Protein translocase subunit SecA 2 from Mycobacterium sp. (strain JLS).